The primary structure comprises 419 residues: Transcription termination factor Rho (419 aa).

The 76-residue stretch at 48-123 (DIFGDGVLEI…LKVNEVNYDK (76 aa)) folds into the Rho RNA-BD domain. 3 RNA-binding regions span residues 61–66 (GFGFLR), 78–80 (DIY), and 108–110 (ERY). ATP contacts are provided by residues 169 to 174 (GRGQRG), 181 to 186 (KAGKTI), and Arg212. The interval 284–288 (VLTGG) is RNA-binding 2.

This sequence belongs to the Rho family. Homohexamer. The homohexamer assembles into an open ring structure.

Its function is as follows. Facilitates transcription termination by a mechanism that involves Rho binding to the nascent RNA, activation of Rho's RNA-dependent ATPase activity, and release of the mRNA from the DNA template. The chain is Transcription termination factor Rho from Buchnera aphidicola subsp. Acyrthosiphon pisum (strain APS) (Acyrthosiphon pisum symbiotic bacterium).